Consider the following 131-residue polypeptide: MTAKTEEILESLKSLSLLEASELVKQIEEAFGVSAAASAGVVMAAPGAAGGDGDGGAAEEKTEFDVILESFDAAAKIKVLKVVRNATGLGLGDAKALVESAPKTVKEGIAKADAETLKKEIEEAGGKVTLK.

The protein belongs to the bacterial ribosomal protein bL12 family. Homodimer. Part of the ribosomal stalk of the 50S ribosomal subunit. Forms a multimeric L10(L12)X complex, where L10 forms an elongated spine to which 2 to 4 L12 dimers bind in a sequential fashion. Binds GTP-bound translation factors.

Functionally, forms part of the ribosomal stalk which helps the ribosome interact with GTP-bound translation factors. Is thus essential for accurate translation. In Prochlorococcus marinus (strain MIT 9515), this protein is Large ribosomal subunit protein bL12.